The chain runs to 372 residues: Transaldolase 2 (372 aa).

Lys-140 (schiff-base intermediate with substrate) is an active-site residue.

This sequence belongs to the transaldolase family. Type 2 subfamily.

It is found in the cytoplasm. The catalysed reaction is D-sedoheptulose 7-phosphate + D-glyceraldehyde 3-phosphate = D-erythrose 4-phosphate + beta-D-fructose 6-phosphate. It functions in the pathway carbohydrate degradation; pentose phosphate pathway; D-glyceraldehyde 3-phosphate and beta-D-fructose 6-phosphate from D-ribose 5-phosphate and D-xylulose 5-phosphate (non-oxidative stage): step 2/3. Transaldolase is important for the balance of metabolites in the pentose-phosphate pathway. This Streptomyces avermitilis (strain ATCC 31267 / DSM 46492 / JCM 5070 / NBRC 14893 / NCIMB 12804 / NRRL 8165 / MA-4680) protein is Transaldolase 2.